The following is a 698-amino-acid chain: Protein CRAC (698 aa).

In terms of domain architecture, PH spans 22 to 122 (DVSYSSIMKK…FLTLLIARIR (101 aa)). Residues 594-630 (TGGGSVPSSQSTNNLQSSTSSMSSLSSSSTSTTKRSH) are disordered. The span at 601-626 (SSQSTNNLQSSTSSMSSLSSSSTSTT) shows a compositional bias: low complexity.

It localises to the cytoplasm. Functionally, couples activated G protein to adenylyl cyclase signal transduction from surface cAMP receptor. Pianissimo a cytosolic regulator and CRAC, are both essential for activation of the enzyme adenylyl cyclase. Pianissimo and CRAC do not function redundantly. Both proteins are integral components of the adenylyl cyclase activation pathway. In Dictyostelium discoideum (Social amoeba), this protein is Protein CRAC (dagA).